The primary structure comprises 756 residues: Sodium/hydrogen exchanger 8 (756 aa).

At 1–31 (MTSIIGAALPYKSPEKAIASSSYSAENDSSP) the chain is on the extracellular side. The N-linked (GlcNAc...) asparagine glycan is linked to N27. A helical transmembrane segment spans residues 32–52 (VDAVIFAGTSLVLGTACRYLF). The Cytoplasmic segment spans residues 53–56 (NGTR). The chain crosses the membrane as a helical span at residues 57-77 (VPYTVVLLVIGIFLGSLEYGT). Topologically, residues 78–89 (KHNLGKLGHGIR) are extracellular. A helical membrane pass occupies residues 90 to 110 (IWNGINPDLLLAVFLPVLLFE). Topologically, residues 111–125 (SSFSMDVHQIKRCMG) are cytoplasmic. A helical membrane pass occupies residues 126–146 (QMVLLAGPGVLISTFCLGALI). Residues 147–157 (KLTFPYNWDWK) lie on the Extracellular side of the membrane. The chain crosses the membrane as a helical span at residues 158-178 (TSLLLGGLLGATDPVAVVALL). Over 179–194 (KELGASKKMTTLIDGE) the chain is Cytoplasmic. Residues 195–215 (SLMNDGVSVVVFQLFFKMVMG) form a helical membrane-spanning segment. Residues 216–225 (HNSDWGSIIK) are Extracellular-facing. The helical transmembrane segment at 226–248 (FLVQNSFGAVGIGLAFGIASVFW) threads the bilayer. Residues 249–251 (LKF) are Cytoplasmic-facing. A helical membrane pass occupies residues 252-271 (IFNDTVAQITVTLSASYFAY). The Extracellular segment spans residues 272–276 (YTAQE). Residues 277 to 297 (WAGVSGILTVMILGMFFAAFA) form a helical membrane-spanning segment. Residues 298–311 (RTAFKGDSHQSLHH) lie on the Cytoplasmic side of the membrane. A helical membrane pass occupies residues 312–332 (FWEMAAYIANTLVFMLSGVII). Residues 333–350 (AESVLSGQTISYKGNSWS) lie on the Extracellular side of the membrane. A helical transmembrane segment spans residues 351 to 371 (FLFLLYLYVQLSRCVVVGVLY). At 372-385 (PLLCRSGYGLDWKE) the chain is on the cytoplasmic side. The chain crosses the membrane as a helical span at residues 386-406 (SIILTWSGLRGAVSLSLALSV). The Extracellular portion of the chain corresponds to 407–422 (KQSSGNSYLSSDTGTR). A helical membrane pass occupies residues 423–443 (FLFLTGGIVFLTLVVNGSTTQ). At 444-756 (LLLHLLRMDT…RSLAIGETDA (313 aa)) the chain is on the cytoplasmic side.

It belongs to the monovalent cation:proton antiporter 1 (CPA1) transporter (TC 2.A.36) family.

It is found in the cell membrane. It carries out the reaction Na(+)(in) + H(+)(out) = Na(+)(out) + H(+)(in). It catalyses the reaction K(+)(in) + H(+)(out) = K(+)(out) + H(+)(in). In terms of biological role, may act in low affinity electroneutral exchange of protons for cations such as Na(+) or K(+) across membranes. May also exchange Li(+) and Cs(+) with a lower affinity. The protein is Sodium/hydrogen exchanger 8 (NHX8) of Arabidopsis thaliana (Mouse-ear cress).